A 466-amino-acid polypeptide reads, in one-letter code: mRNA-capping enzyme subunit alpha (466 aa).

The N6-GMP-lysine intermediate role is filled by lysine 67. The segment at 408–466 is disordered; it reads REQGLKNAQKQFNHQASARSSLSQQHSTEPEQSQDQPKYVDDDDDNWSDDEPDTKRQKI. Positions 413–443 are enriched in polar residues; the sequence is KNAQKQFNHQASARSSLSQQHSTEPEQSQDQ. The segment covering 448-459 has biased composition (acidic residues); the sequence is DDDDDNWSDDEP.

The protein belongs to the eukaryotic GTase family. In terms of assembly, heterodimer. The mRNA-capping enzyme is composed of two separate chains alpha and beta, respectively a mRNA guanylyltransferase and an mRNA 5'-triphosphate monophosphatase.

The protein resides in the nucleus. It catalyses the reaction a 5'-end diphospho-ribonucleoside in mRNA + GTP + H(+) = a 5'-end (5'-triphosphoguanosine)-ribonucleoside in mRNA + diphosphate. Its function is as follows. Second step of mRNA capping. Transfer of the GMP moiety of GTP to the 5'-end of RNA via an enzyme-GMP covalent reaction intermediate. This is mRNA-capping enzyme subunit alpha (CEG1) from Kluyveromyces lactis (strain ATCC 8585 / CBS 2359 / DSM 70799 / NBRC 1267 / NRRL Y-1140 / WM37) (Yeast).